The chain runs to 173 residues: Glucagon family neuropeptides (173 aa).

The signal sequence occupies residues 1–22 (MSSKATLALLIYGIIMHYSVYS). The propeptide occupies 23–80 (SPLGLNYPNLRLENEVYDEDGNSLPALAFDSDQIAIRSPPSVADDLYTLYYPPEKGTE). Lys-166 bears the Lysine amide mark. Residues 170-173 (LGYL) constitute a propeptide that is removed on maturation.

This sequence belongs to the glucagon family.

It is found in the secreted. Its function is as follows. Primary role of GHRH is to release GH from the pituitary. Functionally, PACAP plays pivotal roles as a neurotransmitter and/or a neuromodulator. The sequence is that of Glucagon family neuropeptides from Oncorhynchus nerka (Sockeye salmon).